A 342-amino-acid chain; its full sequence is Tetraacyldisaccharide 4'-kinase (342 aa).

68-75 (TVGGTGKT) contributes to the ATP binding site.

Belongs to the LpxK family.

It catalyses the reaction a lipid A disaccharide + ATP = a lipid IVA + ADP + H(+). The protein operates within glycolipid biosynthesis; lipid IV(A) biosynthesis; lipid IV(A) from (3R)-3-hydroxytetradecanoyl-[acyl-carrier-protein] and UDP-N-acetyl-alpha-D-glucosamine: step 6/6. In terms of biological role, transfers the gamma-phosphate of ATP to the 4'-position of a tetraacyldisaccharide 1-phosphate intermediate (termed DS-1-P) to form tetraacyldisaccharide 1,4'-bis-phosphate (lipid IVA). This Burkholderia ambifaria (strain MC40-6) protein is Tetraacyldisaccharide 4'-kinase.